The sequence spans 473 residues: Argininosuccinate lyase (473 aa).

2-(N(omega)-L-arginino)succinate contacts are provided by S34, N121, and T166. H167 (proton acceptor) is an active-site residue. The Proton donor role is filled by S289. 2-(N(omega)-L-arginino)succinate is bound by residues N297, Y329, and Q334.

Belongs to the lyase 1 family. Argininosuccinate lyase subfamily.

The enzyme catalyses 2-(N(omega)-L-arginino)succinate = fumarate + L-arginine. Its pathway is amino-acid biosynthesis; L-arginine biosynthesis; L-arginine from L-ornithine and carbamoyl phosphate: step 3/3. This Chlamydomonas reinhardtii (Chlamydomonas smithii) protein is Argininosuccinate lyase (ARG7).